Consider the following 202-residue polypeptide: uncharacterized protein (202 aa).

The HTH tetR-type domain occupies 14 to 74 (NAKTERILDV…AMADRYFQRC (61 aa)).

This is an uncharacterized protein from Xanthobacter autotrophicus.